The following is an 855-amino-acid chain: Pre-mRNA-splicing factor SYF1 (855 aa).

HAT repeat units follow at residues leucine 15–glycine 47, alanine 48–alanine 80, proline 90–aspartate 122, glycine 124–serine 158, proline 160–arginine 192, glutamine 198–glutamine 230, valine 235–arginine 268, glycine 270–serine 305, and glycine 369–aspartate 407. Lysine 420 is modified (N6-acetyllysine). HAT repeat units follow at residues glycine 498–glutamate 530, lysine 532–alanine 566, arginine 571–glutamate 605, tyrosine 643–lysine 677, and glycine 679–arginine 713. Residues leucine 810 to aspartate 855 are disordered. Positions glutamine 820–proline 834 are enriched in acidic residues. Serine 851 is subject to Phosphoserine.

It belongs to the crooked-neck family. In terms of assembly, associates with RNA polymerase II, the TCR-specific proteins CKN1/CSA and ERCC6/CSB, and XPA. Identified in the spliceosome C complex. Component of the XAB2 complex, a multimeric protein complex composed of XAB2, PRPF19, AQR, ZNF830, ISY1, and PPIE. Identified in a pentameric intron-binding (IB) complex composed of AQR, XAB2, ISY1, ZNF830 and PPIE that is incorporated into the spliceosome as a preassembled complex. The IB complex does not contain PRPF19.

It is found in the nucleus. Functionally, involved in pre-mRNA splicing as component of the spliceosome. Involved in transcription-coupled repair (TCR), transcription and pre-mRNA splicing. The chain is Pre-mRNA-splicing factor SYF1 (XAB2) from Homo sapiens (Human).